Consider the following 630-residue polypeptide: Chaperone protein HtpG (630 aa).

Residues 1-327 (MSVETYKFDA…SEDLSLNISR (327 aa)) form an a; substrate-binding region. The b stretch occupies residues 328 to 551 (ETLQHSPLID…EGSMDIRTER (224 aa)). A compositionally biased stretch (basic and acidic residues) spans 483–499 (TKTAKSSDTNNDGKDDT). The interval 483–504 (TKTAKSSDTNNDGKDDTSSSDD) is disordered. The c stretch occupies residues 552 to 630 (FLIEQKQLSS…INFFIEKSVN (79 aa)).

This sequence belongs to the heat shock protein 90 family. In terms of assembly, homodimer.

It is found in the cytoplasm. In terms of biological role, molecular chaperone. Has ATPase activity. The sequence is that of Chaperone protein HtpG from Orientia tsutsugamushi (strain Boryong) (Rickettsia tsutsugamushi).